The sequence spans 245 residues: TLC domain-containing protein 5 (245 aa).

Helical transmembrane passes span M1 to I21, L38 to D58, V75 to F95, G99 to L119, F162 to C182, and W191 to I211. The region spanning H29–S204 is the TLC domain.

Belongs to the TLCD5 family.

It localises to the membrane. This Homo sapiens (Human) protein is TLC domain-containing protein 5.